Reading from the N-terminus, the 769-residue chain is Serine/threonine-protein kinase PLK4 (769 aa).

Residues 14 to 267 form the Protein kinase domain; sequence YEVQHLLGKG…LEAVLCHPFM (254 aa). ATP contacts are provided by residues 20 to 28 and Lys-43; that span reads LGKGGFATV. The active-site Proton acceptor is Asp-138. Residues 381–498 enclose the Cryptic POLO box 1 (CPB1) domain; that stretch reads EDRISVPPLN…ARFVGLVKSK (118 aa). A Cryptic POLO box 2 (CPB2) domain is found at 499-602; sequence TPKVTYFSTL…GRRPITDVQP (104 aa). Residues 660-739 form the POLO box domain; that stretch reads PIKRINVPEI…IPNIQLKLKT (80 aa).

The protein belongs to the protein kinase superfamily. Ser/Thr protein kinase family. CDC5/Polo subfamily. In terms of assembly, homodimer. Interacts with Alms1a. In terms of processing, ubiquitinated by the SCF-slmb ubiquitin ligase complex; leading to its degradation by the proteasome during interphase and regulating centriole number and ensuring the block to centriole reduplication. In terms of tissue distribution, expressed in testis (at protein level).

The protein localises to the cytoplasm. It is found in the cytoskeleton. The protein resides in the microtubule organizing center. It localises to the centrosome. Its subcellular location is the centriole. The catalysed reaction is L-seryl-[protein] + ATP = O-phospho-L-seryl-[protein] + ADP + H(+). The enzyme catalyses L-threonyl-[protein] + ATP = O-phospho-L-threonyl-[protein] + ADP + H(+). Its function is as follows. Serine/threonine-protein kinase that plays a central role in centriole duplication. Able to trigger procentriole formation on the surface of the mother centriole cylinder, using mother centriole as a platform, leading to the recruitment of centriole biogenesis proteins such as Sas-6. When overexpressed, it is able to induce centrosome amplification through the simultaneous generation of multiple procentrioles adjoining each parental centriole during S phase. Centrosome amplification following overexpression can initiate tumorigenesis, highlighting the importance of centrosome regulation in cancers. The chain is Serine/threonine-protein kinase PLK4 (SAK) from Drosophila melanogaster (Fruit fly).